The chain runs to 275 residues: Protein CIMAP1C (275 aa).

STPGR repeat units follow at residues proline 200–arginine 225 and proline 236–lysine 261.

It belongs to the CIMAP family.

The chain is Protein CIMAP1C (CIMAP1C) from Mus musculus (Mouse).